The chain runs to 760 residues: Xaa-Pro dipeptidyl-peptidase (760 aa).

Catalysis depends on charge relay system residues Ser349, Asp469, and His499.

This sequence belongs to the peptidase S15 family. As to quaternary structure, homodimer.

It localises to the cytoplasm. It carries out the reaction Hydrolyzes Xaa-Pro-|- bonds to release unblocked, N-terminal dipeptides from substrates including Ala-Pro-|-p-nitroanilide and (sequentially) Tyr-Pro-|-Phe-Pro-|-Gly-Pro-|-Ile.. Removes N-terminal dipeptides sequentially from polypeptides having unsubstituted N-termini provided that the penultimate residue is proline. The sequence is that of Xaa-Pro dipeptidyl-peptidase from Streptococcus pyogenes serotype M3 (strain ATCC BAA-595 / MGAS315).